A 464-amino-acid chain; its full sequence is Serine protease PepD (464 aa).

Positions 1–71 are disordered; it reads MAKLARVVGL…TQYRQPYEAL (71 aa). The Cytoplasmic segment spans residues 1 to 100; the sequence is MAKLARVVGL…GMVRQRPRAG (100 aa). Residues 39–48 show a composition bias toward low complexity; the sequence is QGQQQTYSQQ. Residues 101–121 form a helical membrane-spanning segment; sequence MLAIGAVTIAVVSAGIGGAAA. The Periplasmic segment spans residues 122 to 464; sequence SLVGFNRAPA…VQVTLGKAEQ (343 aa). Residues histidine 197, aspartate 236, and serine 317 each act as charge relay system in the active site. A PDZ domain is found at 368-449; the sequence is LISTGKASHA…TVALTFQDPS (82 aa).

This sequence belongs to the peptidase S1C family. Homotrimer. Interacts with numerous proteins, including the 35 kDa antigen PspA.

The protein resides in the cell inner membrane. It is found in the secreted. Its subcellular location is the cell wall. It carries out the reaction Acts on substrates that are at least partially unfolded. The cleavage site P1 residue is normally between a pair of hydrophobic residues, such as Val-|-Val.. Probably regulates its own activity by autocleavage, which removes the PDZ domain. Inhibited by the serine protease inhibitor diisopropylfluorophosphate (DFP). Inhibited by fluoroquinolone such as ciprofloxacin, moxifloxacin and ofloxacin and their analogs. In terms of biological role, required for virulence. Acts both as a protease, which degrades and/or refolds damaged substrate targets, and as a chaperone. Plays an important role in the stress response network mediated through the two-component regulatory system MprAB and SigE signaling networks. May utilize its PDZ domain to recognize and process misfolded proteins at the cell membrane, leading to activation of the MprAB and SigE signaling pathways and subsequent establishment of a positive feedback loop that facilitates bacterial adaptation. Interacts with and potentially cleaves several proteins, including the 35 kDa antigen PspA. Proteolytic cleavage of PspA may help to maintain cell envelope homeostasis in Mycobacterium and regulate specific stress response pathways during periods of extracytoplasmic stress. In vitro, exhibits proteolytic activity against the artificial substrate beta-casein. The polypeptide is Serine protease PepD (Mycobacterium tuberculosis (strain ATCC 25618 / H37Rv)).